The chain runs to 246 residues: UDP-N-acetyl-D-mannosaminuronic acid transferase (246 aa).

The protein belongs to the glycosyltransferase 26 family.

It carries out the reaction UDP-N-acetyl-alpha-D-mannosaminouronate + N-acetyl-alpha-D-glucosaminyl-di-trans,octa-cis-undecaprenyl diphosphate = beta-D-ManNAcA-(1-&gt;4)-alpha-D-GlcNAc-di-trans,octa-cis-undecaprenyl diphosphate + UDP + H(+). It participates in bacterial outer membrane biogenesis; enterobacterial common antigen biosynthesis. Functionally, catalyzes the synthesis of Und-PP-GlcNAc-ManNAcA (Lipid II), the second lipid-linked intermediate involved in enterobacterial common antigen (ECA) synthesis. In Escherichia coli O127:H6 (strain E2348/69 / EPEC), this protein is UDP-N-acetyl-D-mannosaminuronic acid transferase.